We begin with the raw amino-acid sequence, 506 residues long: Maturase K (506 aa).

Belongs to the intron maturase 2 family. MatK subfamily.

It is found in the plastid. It localises to the chloroplast. In terms of biological role, usually encoded in the trnK tRNA gene intron. Probably assists in splicing its own and other chloroplast group II introns. The protein is Maturase K of Manihot esculenta (Cassava).